An 80-amino-acid chain; its full sequence is Exodeoxyribonuclease 7 small subunit (80 aa).

The protein belongs to the XseB family. Heterooligomer composed of large and small subunits.

The protein resides in the cytoplasm. It carries out the reaction Exonucleolytic cleavage in either 5'- to 3'- or 3'- to 5'-direction to yield nucleoside 5'-phosphates.. In terms of biological role, bidirectionally degrades single-stranded DNA into large acid-insoluble oligonucleotides, which are then degraded further into small acid-soluble oligonucleotides. The sequence is that of Exodeoxyribonuclease 7 small subunit from Rickettsia massiliae (strain Mtu5).